The chain runs to 170 residues: SKP1-like protein 16 (170 aa).

Residues 109 to 167 (ILAVNYLNVQDLLGLTCQTVADHMKDMSPEEVRELFNIENDYTPEEEDAIRKENAWAFE) form an interaction with the F-box domain of F-box proteins region.

The protein belongs to the SKP1 family. Part of a SCF (SKP1-cullin-F-box) protein ligase complex. Interacts with CPR1/CPR30, At3g61590 and At4g11590. Mainly detected in the siliques.

It localises to the nucleus. It participates in protein modification; protein ubiquitination. Its function is as follows. Involved in ubiquitination and subsequent proteasomal degradation of target proteins. Together with CUL1, RBX1 and a F-box protein, it forms a SCF E3 ubiquitin ligase complex. The functional specificity of this complex depends on the type of F-box protein. In the SCF complex, it serves as an adapter that links the F-box protein to CUL1. This is SKP1-like protein 16 (ASK16) from Arabidopsis thaliana (Mouse-ear cress).